Consider the following 288-residue polypeptide: Octanoyl-[GcvH]:protein N-octanoyltransferase (288 aa).

The BPL/LPL catalytic domain occupies 44-253 (AGGPPTFRLW…VLESAMGPQV (210 aa)). C148 serves as the catalytic Acyl-thioester intermediate. Residues 269 to 288 (GREGASETDPRRVAYGVDRP) are disordered. Basic and acidic residues predominate over residues 272–288 (GASETDPRRVAYGVDRP).

The protein belongs to the octanoyltransferase LipL family.

The catalysed reaction is N(6)-octanoyl-L-lysyl-[glycine-cleavage complex H protein] + L-lysyl-[lipoyl-carrier protein] = N(6)-octanoyl-L-lysyl-[lipoyl-carrier protein] + L-lysyl-[glycine-cleavage complex H protein]. It functions in the pathway protein modification; protein lipoylation via endogenous pathway; protein N(6)-(lipoyl)lysine from octanoyl-[acyl-carrier-protein]. Functionally, catalyzes the amidotransfer (transamidation) of the octanoyl moiety from octanoyl-GcvH to the lipoyl domain of the E2 subunit of lipoate-dependent enzymes. In Kyrpidia tusciae (strain DSM 2912 / NBRC 15312 / T2) (Bacillus tusciae), this protein is Octanoyl-[GcvH]:protein N-octanoyltransferase.